Here is a 449-residue protein sequence, read N- to C-terminus: Protein king tubby (449 aa).

The interval 123–197 (SAVHSANSTQ…GTGGESEGDV (75 aa)) is disordered. Residues 124–145 (AVHSANSTQSQRPRPRQHSFSD) are compositionally biased toward polar residues. S142 bears the Phosphoserine mark. Residues 154 to 166 (NRNVAAAAPVRPA) are compositionally biased toward low complexity. The span at 183–192 (NGTGNGTGGE) shows a compositional bias: gly residues.

This sequence belongs to the TUB family.

The protein localises to the cytoplasm. It localises to the nucleus. It is found in the cell projection. Its subcellular location is the cilium membrane. The protein resides in the rhabdomere. This chain is Protein king tubby, found in Drosophila ananassae (Fruit fly).